Consider the following 478-residue polypeptide: Cytochrome c-552 (478 aa).

Positions 1–26 are cleaved as a signal peptide; it reads MARKTLRARRFFSLIFPFFFITSVYA. H94 contributes to the heme c binding site. Heme-binding residues include C122, C125, and K126. Heme c is bound by residues C160, C163, H164, C209, C212, and H213. E215, Y216, K261, and Q263 together coordinate Ca(2+). Y216 is a binding site for substrate. Residue H264 coordinates substrate. Positions 275, 282, 285, 286, 301, 314, 317, 318, and 393 each coordinate heme c.

It belongs to the cytochrome c-552 family. Requires Ca(2+) as cofactor. Heme c is required as a cofactor.

It localises to the periplasm. The catalysed reaction is 6 Fe(III)-[cytochrome c] + NH4(+) + 2 H2O = 6 Fe(II)-[cytochrome c] + nitrite + 8 H(+). It participates in nitrogen metabolism; nitrate reduction (assimilation). In terms of biological role, catalyzes the reduction of nitrite to ammonia, consuming six electrons in the process. The polypeptide is Cytochrome c-552 (Salmonella typhi).